A 553-amino-acid chain; its full sequence is Protein PNS1 (553 aa).

Over residues 1–17 (MYGKSGPPPEGYVPQHP) the composition is skewed to pro residues. Residues 1 to 49 (MYGKSGPPPEGYVPQHPPAQGYAPHNPPPGYVHENPFQEPVPQGQEYSP) form a disordered region. The Cytoplasmic segment spans residues 1–95 (MYGKSGPPPE…AGNRLKFNDW (95 aa)). Residues 96-116 (PFTIIFLLTVGAFIAVAVLTL) form a helical membrane-spanning segment. The Extracellular portion of the chain corresponds to 117-143 (RGWSLSPTSNGSGIYDGDNTHTLNTNA). An N-linked (GlcNAc...) asparagine glycan is attached at N126. Residues 144-164 (AILLLISCGVAVALSVFGLVL) traverse the membrane as a helical segment. The Cytoplasmic segment spans residues 165–170 (AGMYTK). Residues 171 to 191 (FFIYAAMILNTVVGLGTAITY) form a helical membrane-spanning segment. At 192–196 (LVLRH) the chain is on the extracellular side. A helical membrane pass occupies residues 197 to 217 (WSAGIVFMIFTILTAVCYWLM). Residues 218 to 243 (RSRIPFSVAVLRTVMSVMKKHPQTWL) are Cytoplasmic-facing. The chain crosses the membrane as a helical span at residues 244–264 (VSLLGTIVSAAFSVIFSVVLV). Residues 265 to 288 (ATYIKYDPKSENGGCDVSGGSCSR) are Extracellular-facing. The helical transmembrane segment at 289-309 (GKLIGILVLVFFCGFYISEVI) threads the bilayer. The Cytoplasmic portion of the chain corresponds to 310 to 346 (RNVIHCTIAGIYGCWYYFSKSDQGMPRWPAFGSLKRA). A helical transmembrane segment spans residues 347-367 (LTTSFGSICFGSLIVSLIQLL). Residues 368 to 385 (RQIIQLLRNGIISGISDS) lie on the Extracellular side of the membrane. The chain crosses the membrane as a helical span at residues 386–406 (GWMQCLWLILDAVVGVFEWMA). Residues 407-450 (EYFNHYAYCFIALYGKPYLRAAKETWHMLREKGIDALINDNLIN) are Cytoplasmic-facing. The chain crosses the membrane as a helical span at residues 451 to 471 (LALGFYTLFVGYTTALFSYLF). Residues 472–483 (LRFTKPDYNSGG) are Extracellular-facing. The chain crosses the membrane as a helical span at residues 484–504 (GFNAVLMAFSFLIAIQLTHVA). The Cytoplasmic portion of the chain corresponds to 505–553 (TETIRSGTATFFVALGNDPEIFRVSYPQRFDEIFRAYPDVLNKLSHQHV).

It belongs to the CTL (choline transporter-like) family.

It localises to the cell membrane. Its function is as follows. Probably involved in transport through the plasma membrane. The chain is Protein PNS1 (PNS1) from Eremothecium gossypii (strain ATCC 10895 / CBS 109.51 / FGSC 9923 / NRRL Y-1056) (Yeast).